A 246-amino-acid polypeptide reads, in one-letter code: Octanoyltransferase (246 aa).

The BPL/LPL catalytic domain occupies Pro50–Thr231. Residues Arg90–His97, Ala162–Gly164, and Gly175–Ser177 contribute to the substrate site. Cys193 functions as the Acyl-thioester intermediate in the catalytic mechanism.

It belongs to the LipB family.

It is found in the cytoplasm. It carries out the reaction octanoyl-[ACP] + L-lysyl-[protein] = N(6)-octanoyl-L-lysyl-[protein] + holo-[ACP] + H(+). The protein operates within protein modification; protein lipoylation via endogenous pathway; protein N(6)-(lipoyl)lysine from octanoyl-[acyl-carrier-protein]: step 1/2. Its function is as follows. Catalyzes the transfer of endogenously produced octanoic acid from octanoyl-acyl-carrier-protein onto the lipoyl domains of lipoate-dependent enzymes. Lipoyl-ACP can also act as a substrate although octanoyl-ACP is likely to be the physiological substrate. In Burkholderia pseudomallei (strain 1106a), this protein is Octanoyltransferase.